Consider the following 638-residue polypeptide: Threonine--tRNA ligase (638 aa).

Residues 1 to 61 form the TGS domain; the sequence is MPVVTLPDGS…EADAEVALVT (61 aa). A catalytic region spans residues 242 to 533; that stretch reads DHRKLGKALD…LTEHYAGQYP (292 aa). Zn(2+) is bound by residues Cys-333, His-384, and His-510.

Belongs to the class-II aminoacyl-tRNA synthetase family. In terms of assembly, homodimer. Zn(2+) serves as cofactor.

Its subcellular location is the cytoplasm. The catalysed reaction is tRNA(Thr) + L-threonine + ATP = L-threonyl-tRNA(Thr) + AMP + diphosphate + H(+). Functionally, catalyzes the attachment of threonine to tRNA(Thr) in a two-step reaction: L-threonine is first activated by ATP to form Thr-AMP and then transferred to the acceptor end of tRNA(Thr). Also edits incorrectly charged L-seryl-tRNA(Thr). In Methylococcus capsulatus (strain ATCC 33009 / NCIMB 11132 / Bath), this protein is Threonine--tRNA ligase.